The following is an 82-amino-acid chain: Lectin-D2 (82 aa).

Chitin-binding type-1 domains are found at residues 1 to 42 (APEC…QCDY) and 43 to 82 (WRCGRDFGGRLCEEDMCCSKYGWCGYSDDHCEDGCQSQCD). 4 cysteine pairs are disulfide-bonded: Cys-4–Cys-19, Cys-13–Cys-25, Cys-18–Cys-32, and Cys-36–Cys-40. A carbohydrate contacts are provided by Ser-20, Trp-22, Tyr-24, and Tyr-31. Position 43 (Trp-43) interacts with a carbohydrate. 4 disulfide bridges follow: Cys-45-Cys-60, Cys-54-Cys-66, Cys-59-Cys-73, and Cys-77-Cys-81. Ser-61, Tyr-63, Trp-65, and His-72 together coordinate a carbohydrate.

Monomer.

Functionally, N-acetyl-D-glucosamine binding lectin. Shows no hemagglutinating activity towards rabbit erythrocytes and weak activity towards trypsin-treated erythrocytes. Has mitogenic activity towards human peripheral blood lymphocytes (HPBL). In Phytolacca americana (American pokeweed), this protein is Lectin-D2.